Here is an 84-residue protein sequence, read N- to C-terminus: Cell division protein CrgA (84 aa).

2 helical membrane passes run 31-51 (VAPVMLAMFLIGLAWIVVFYV) and 60-80 (ALDNWNIVVGFGFIAAGFGVS).

This sequence belongs to the CrgA family.

Its subcellular location is the cell membrane. Functionally, involved in cell division. Coordinates growth and cell division. Required for the formation of the sporulation septa. The sequence is that of Cell division protein CrgA from Streptomyces avermitilis (strain ATCC 31267 / DSM 46492 / JCM 5070 / NBRC 14893 / NCIMB 12804 / NRRL 8165 / MA-4680).